The primary structure comprises 161 residues: Regulator of ribonuclease activity A (161 aa).

Belongs to the RraA family. Homotrimer. Binds to both RNA-binding sites in the C-terminal region of Rne and to RhlB.

The protein resides in the cytoplasm. In terms of biological role, globally modulates RNA abundance by binding to RNase E (Rne) and regulating its endonucleolytic activity. Can modulate Rne action in a substrate-dependent manner by altering the composition of the degradosome. Modulates RNA-binding and helicase activities of the degradosome. The sequence is that of Regulator of ribonuclease activity A from Cronobacter sakazakii (strain ATCC BAA-894) (Enterobacter sakazakii).